A 148-amino-acid polypeptide reads, in one-letter code: Putative nickel-responsive regulator (148 aa).

His-76, His-87, His-89, and Cys-95 together coordinate Ni(2+).

This sequence belongs to the transcriptional regulatory CopG/NikR family. The cofactor is Ni(2+).

In terms of biological role, transcriptional regulator. The polypeptide is Putative nickel-responsive regulator (Rhodopseudomonas palustris (strain ATCC BAA-98 / CGA009)).